The primary structure comprises 367 residues: Glutamate 5-kinase (367 aa).

An ATP-binding site is contributed by lysine 9. 3 residues coordinate substrate: serine 49, aspartate 136, and asparagine 148. Residues threonine 168–aspartate 169 and threonine 210–lysine 216 each bind ATP. The 75-residue stretch at serine 276–arginine 350 folds into the PUA domain.

The protein belongs to the glutamate 5-kinase family.

The protein localises to the cytoplasm. The catalysed reaction is L-glutamate + ATP = L-glutamyl 5-phosphate + ADP. It participates in amino-acid biosynthesis; L-proline biosynthesis; L-glutamate 5-semialdehyde from L-glutamate: step 1/2. Functionally, catalyzes the transfer of a phosphate group to glutamate to form L-glutamate 5-phosphate. The sequence is that of Glutamate 5-kinase from Bacillus cereus (strain B4264).